Here is a 309-residue protein sequence, read N- to C-terminus: Olfactory receptor 6C4 (309 aa).

Topologically, residues 1–23 (MKNRTMFGEFILLGLTNQPELQV) are extracellular. The N-linked (GlcNAc...) asparagine glycan is linked to asparagine 3. A helical membrane pass occupies residues 24–44 (MIFIFLFLTYMLSILGNLTII). Over 45 to 52 (TLTLLDPH) the chain is Cytoplasmic. Residues 53-73 (LQTPMYFFLRNFSFLEISFTS) traverse the membrane as a helical segment. Over 74 to 97 (IFIPRFLTSMTTGNKVISFAGCLT) the chain is Extracellular. A disulfide bridge links cysteine 95 with cysteine 187. Residues 98–118 (QYFFAIFLGATEFYLLASMSY) traverse the membrane as a helical segment. Residues 119-137 (DRYVAICKPLHYLTIMSSR) are Cytoplasmic-facing. Residues 138-158 (VCIQLVFCSWLGGFLAILPPI) form a helical membrane-spanning segment. Residues 159–195 (ILMTQVDFCVSNILNHYYCDYGPLVELACSDTSLLEL) are Extracellular-facing. Residues 196–215 (MVILLAVVTLMVTLVLVTLS) form a helical membrane-spanning segment. Residues 216–235 (YTYIIRTILRIPSAQQRTKA) are Cytoplasmic-facing. The chain crosses the membrane as a helical span at residues 236-256 (FSTCSSHMIVISLSYGSCMFM). Over 257–269 (YINPSAKEGGAFN) the chain is Extracellular. The chain crosses the membrane as a helical span at residues 270–290 (KGIAVLITSVTPLLNPFIYTL). Residues 291–309 (RNQQVKQAFKDSVKKIVKL) are Cytoplasmic-facing.

This sequence belongs to the G-protein coupled receptor 1 family.

Its subcellular location is the cell membrane. Functionally, odorant receptor. This chain is Olfactory receptor 6C4 (OR6C4), found in Homo sapiens (Human).